We begin with the raw amino-acid sequence, 343 residues long: Uroporphyrinogen decarboxylase (343 aa).

Substrate is bound by residues 23–27 (RQAGR), D73, Y150, S205, and H322.

The protein belongs to the uroporphyrinogen decarboxylase family. As to quaternary structure, homodimer.

It localises to the cytoplasm. The enzyme catalyses uroporphyrinogen III + 4 H(+) = coproporphyrinogen III + 4 CO2. It participates in porphyrin-containing compound metabolism; protoporphyrin-IX biosynthesis; coproporphyrinogen-III from 5-aminolevulinate: step 4/4. Catalyzes the decarboxylation of four acetate groups of uroporphyrinogen-III to yield coproporphyrinogen-III. This chain is Uroporphyrinogen decarboxylase, found in Cereibacter sphaeroides (strain ATCC 17029 / ATH 2.4.9) (Rhodobacter sphaeroides).